Here is a 277-residue protein sequence, read N- to C-terminus: Multiple sugar-binding transport system permease protein MsmG (277 aa).

A run of 6 helical transmembrane segments spans residues Y13–S33, V74–I94, L110–M130, L141–I161, T198–L218, and G243–F263. Residues F69–F263 enclose the ABC transmembrane type-1 domain.

It belongs to the binding-protein-dependent transport system permease family. MalFG subfamily.

The protein localises to the cell membrane. Its function is as follows. Involved in a binding protein-dependent transport system responsible for the uptake of melibiose, raffinose and isomaltotriose. The sequence is that of Multiple sugar-binding transport system permease protein MsmG (msmG) from Streptococcus mutans serotype c (strain ATCC 700610 / UA159).